Here is a 311-residue protein sequence, read N- to C-terminus: Lipoyl synthase (311 aa).

Positions 47, 52, 58, 73, 77, 80, and 286 each coordinate [4Fe-4S] cluster. Residues 59-276 (WSRHTATYLA…RSVGESLGLF (218 aa)) enclose the Radical SAM core domain.

This sequence belongs to the radical SAM superfamily. Lipoyl synthase family. It depends on [4Fe-4S] cluster as a cofactor.

The protein localises to the cytoplasm. The catalysed reaction is [[Fe-S] cluster scaffold protein carrying a second [4Fe-4S](2+) cluster] + N(6)-octanoyl-L-lysyl-[protein] + 2 oxidized [2Fe-2S]-[ferredoxin] + 2 S-adenosyl-L-methionine + 4 H(+) = [[Fe-S] cluster scaffold protein] + N(6)-[(R)-dihydrolipoyl]-L-lysyl-[protein] + 4 Fe(3+) + 2 hydrogen sulfide + 2 5'-deoxyadenosine + 2 L-methionine + 2 reduced [2Fe-2S]-[ferredoxin]. It functions in the pathway protein modification; protein lipoylation via endogenous pathway; protein N(6)-(lipoyl)lysine from octanoyl-[acyl-carrier-protein]: step 2/2. Catalyzes the radical-mediated insertion of two sulfur atoms into the C-6 and C-8 positions of the octanoyl moiety bound to the lipoyl domains of lipoate-dependent enzymes, thereby converting the octanoylated domains into lipoylated derivatives. This chain is Lipoyl synthase, found in Chlamydia trachomatis serovar L2 (strain ATCC VR-902B / DSM 19102 / 434/Bu).